Reading from the N-terminus, the 409-residue chain is FADH(2)-dependent resorcinol hydroxylase, oxygenase component (409 aa).

The protein belongs to the HpaH/HsaA monooxygenase family. The FADH(2)-dependent resorcinol hydroxylase is composed of two subunits, GraA (the oxygenase component) and GraD (the reductase component). Both subunits are required for activity.

It catalyses the reaction resorcinol + FADH2 + O2 = benzene-1,2,4-triol + FAD + H2O + H(+). It participates in aromatic compound metabolism. Involved in the gamma-resorcylate (2,6-dihydroxybenzoate) catabolism. Oxygenase component of the resorcinol hydroxylase, which catalyzes the FADH(2)-dependent conversion of resorcinol to hydroxyquinol. The protein is FADH(2)-dependent resorcinol hydroxylase, oxygenase component of Rhizobium sp. (strain MTP-10005).